A 322-amino-acid chain; its full sequence is tRNA-dihydrouridine(16) synthase (322 aa).

Residues 8–10 (PME) and glutamine 69 each bind FMN. The active-site Proton donor is the cysteine 99. Residues lysine 140, 200–202 (NGD), and 224–225 (GR) contribute to the FMN site.

The protein belongs to the Dus family. DusC subfamily. FMN serves as cofactor.

The enzyme catalyses 5,6-dihydrouridine(16) in tRNA + NADP(+) = uridine(16) in tRNA + NADPH + H(+). The catalysed reaction is 5,6-dihydrouridine(16) in tRNA + NAD(+) = uridine(16) in tRNA + NADH + H(+). In terms of biological role, catalyzes the synthesis of 5,6-dihydrouridine (D), a modified base found in the D-loop of most tRNAs, via the reduction of the C5-C6 double bond in target uridines. Specifically modifies U16 in tRNAs. The chain is tRNA-dihydrouridine(16) synthase from Cupriavidus necator (strain ATCC 17699 / DSM 428 / KCTC 22496 / NCIMB 10442 / H16 / Stanier 337) (Ralstonia eutropha).